The chain runs to 86 residues: Small ribosomal subunit protein uS17 (86 aa).

This sequence belongs to the universal ribosomal protein uS17 family. Part of the 30S ribosomal subunit.

One of the primary rRNA binding proteins, it binds specifically to the 5'-end of 16S ribosomal RNA. This Caldicellulosiruptor bescii (strain ATCC BAA-1888 / DSM 6725 / KCTC 15123 / Z-1320) (Anaerocellum thermophilum) protein is Small ribosomal subunit protein uS17.